A 226-amino-acid polypeptide reads, in one-letter code: Lipoprotein-releasing system ATP-binding protein LolD (226 aa).

One can recognise an ABC transporter domain in the interval 6-226 (VLISGLTKTF…KLYKGNLEEV (221 aa)). ATP is bound at residue 42-49 (GESGSGKS).

The protein belongs to the ABC transporter superfamily. Lipoprotein translocase (TC 3.A.1.125) family. As to quaternary structure, the complex is composed of two ATP-binding proteins (LolD) and two transmembrane proteins (LolC and LolE).

The protein resides in the cell inner membrane. Its function is as follows. Part of the ABC transporter complex LolCDE involved in the translocation of mature outer membrane-directed lipoproteins, from the inner membrane to the periplasmic chaperone, LolA. Responsible for the formation of the LolA-lipoprotein complex in an ATP-dependent manner. In Treponema denticola (strain ATCC 35405 / DSM 14222 / CIP 103919 / JCM 8153 / KCTC 15104), this protein is Lipoprotein-releasing system ATP-binding protein LolD.